Reading from the N-terminus, the 218-residue chain is MSQVIRTLALTGLALAGLSGCVSVPRGQGGAAPAVVGQVSESARQAEAARQAWLQAHPAWSFQGRVAISKGRDGGSGRLDWQQDGPRYHVQLSAPVTRQSWVLTGDTTTGAGRLEGLDGGPRAGADAEQVLLEATGWTIPVNQMPDWVRALRIADAGAARVDLDEHGRPRTVQQDGWTIDFLEWTPASAAQPELPRRIEARNGDAKVRLLVDQWTLSP.

Positions 1-20 (MSQVIRTLALTGLALAGLSG) are cleaved as a signal peptide. The N-palmitoyl cysteine moiety is linked to residue C21. The S-diacylglycerol cysteine moiety is linked to residue C21.

This sequence belongs to the LolB family. As to quaternary structure, monomer.

Its subcellular location is the cell outer membrane. Plays a critical role in the incorporation of lipoproteins in the outer membrane after they are released by the LolA protein. The protein is Outer-membrane lipoprotein LolB of Xanthomonas campestris pv. campestris (strain B100).